Reading from the N-terminus, the 317-residue chain is tRNA pseudouridine synthase B (317 aa).

The active-site Nucleophile is Asp-47.

This sequence belongs to the pseudouridine synthase TruB family. Type 1 subfamily.

It catalyses the reaction uridine(55) in tRNA = pseudouridine(55) in tRNA. Its function is as follows. Responsible for synthesis of pseudouridine from uracil-55 in the psi GC loop of transfer RNAs. This Shewanella sp. (strain MR-4) protein is tRNA pseudouridine synthase B.